The chain runs to 403 residues: Ribose-phosphate pyrophosphokinase 1, chloroplastic (403 aa).

The transit peptide at methionine 1–lysine 49 directs the protein to the chloroplast. The Mg(2+) site is built by aspartate 217, histidine 219, aspartate 228, and aspartate 232. The binding of phosphoribosylpyrophosphate stretch occupies residues glycine 303–threonine 318.

This sequence belongs to the ribose-phosphate pyrophosphokinase family. Requires Mg(2+) as cofactor.

Its subcellular location is the plastid. It is found in the chloroplast. It catalyses the reaction D-ribose 5-phosphate + ATP = 5-phospho-alpha-D-ribose 1-diphosphate + AMP + H(+). The chain is Ribose-phosphate pyrophosphokinase 1, chloroplastic (PRS1) from Arabidopsis thaliana (Mouse-ear cress).